Reading from the N-terminus, the 137-residue chain is uncharacterized protein (137 aa).

To E.coli YfdK.

This is an uncharacterized protein from Escherichia coli (strain K12).